A 190-amino-acid polypeptide reads, in one-letter code: Class III hydrophobin F (190 aa).

Positions 1–18 (MRPITILCTLATLSTTLA) are cleaved as a signal peptide. 4 cysteine pairs are disulfide-bonded: cysteine 54-cysteine 115, cysteine 62-cysteine 109, cysteine 63-cysteine 97, and cysteine 116-cysteine 131.

The protein belongs to the fungal hydrophobin family. As to quaternary structure, self-assembles to form functional amyloid fibrils called rodlets. Self-assembly into fibrillar rodlets occurs spontaneously at hydrophobic:hydrophilic interfaces and the rodlets further associate laterally to form amphipathic monolayers.

The protein resides in the secreted. It is found in the cell wall. Functionally, aerial growth, conidiation, and dispersal of filamentous fungi in the environment rely upon a capability of their secreting small amphipathic proteins called hydrophobins (HPBs) with low sequence identity. Class I can self-assemble into an outermost layer of rodlet bundles on aerial cell surfaces, conferring cellular hydrophobicity that supports fungal growth, development and dispersal; whereas Class II form highly ordered films at water-air interfaces through intermolecular interactions but contribute nothing to the rodlet structure. RodF and rodG belong to Class III, which contains hydrophobins with intermediate (between classes I and II) or atypical characteristics. RodF, unlike rodA, is not required for rodlet formation. The sequence is that of Class III hydrophobin F from Aspergillus fumigatus (strain ATCC MYA-4609 / CBS 101355 / FGSC A1100 / Af293) (Neosartorya fumigata).